Consider the following 473-residue polypeptide: ATP synthase subunit beta (473 aa).

Position 158–165 (158–165) interacts with ATP; the sequence is GGAGVGKT.

Belongs to the ATPase alpha/beta chains family. F-type ATPases have 2 components, CF(1) - the catalytic core - and CF(0) - the membrane proton channel. CF(1) has five subunits: alpha(3), beta(3), gamma(1), delta(1), epsilon(1). CF(0) has three main subunits: a(1), b(2) and c(9-12). The alpha and beta chains form an alternating ring which encloses part of the gamma chain. CF(1) is attached to CF(0) by a central stalk formed by the gamma and epsilon chains, while a peripheral stalk is formed by the delta and b chains.

It localises to the cell membrane. It catalyses the reaction ATP + H2O + 4 H(+)(in) = ADP + phosphate + 5 H(+)(out). Functionally, produces ATP from ADP in the presence of a proton gradient across the membrane. The catalytic sites are hosted primarily by the beta subunits. The sequence is that of ATP synthase subunit beta from Anoxybacillus flavithermus (strain DSM 21510 / WK1).